The following is a 487-amino-acid chain: ATP synthase subunit beta (487 aa).

164–171 (GGAGVGKT) is a binding site for ATP.

It belongs to the ATPase alpha/beta chains family. As to quaternary structure, F-type ATPases have 2 components, CF(1) - the catalytic core - and CF(0) - the membrane proton channel. CF(1) has five subunits: alpha(3), beta(3), gamma(1), delta(1), epsilon(1). CF(0) has four main subunits: a(1), b(1), b'(1) and c(9-12).

It localises to the cellular thylakoid membrane. The catalysed reaction is ATP + H2O + 4 H(+)(in) = ADP + phosphate + 5 H(+)(out). Produces ATP from ADP in the presence of a proton gradient across the membrane. The catalytic sites are hosted primarily by the beta subunits. This Synechococcus sp. (strain WH7803) protein is ATP synthase subunit beta.